A 314-amino-acid polypeptide reads, in one-letter code: 3'-5' exoribonuclease YhaM (314 aa).

An HD domain is found at 163–279; that stretch reads HVVSMLDLAK…LHYIDNLDAK (117 aa).

This sequence belongs to the YhaM family.

In terms of biological role, shows a 3'-5' exoribonuclease activity. This is 3'-5' exoribonuclease YhaM from Bacillus cereus (strain AH187).